The following is a 365-amino-acid chain: Glycerol dehydrogenase (365 aa).

NAD(+) is bound by residues D37, G94, K95, T116, and S119. Residue D121 participates in glycerol binding. NAD(+) contacts are provided by S125, L127, and Y131. Residues D171, H254, and H271 each coordinate Zn(2+). H254 is a glycerol binding site.

This sequence belongs to the iron-containing alcohol dehydrogenase family. Zn(2+) is required as a cofactor.

The catalysed reaction is glycerol + NAD(+) = dihydroxyacetone + NADH + H(+). Its pathway is polyol metabolism; glycerol fermentation; glycerone phosphate from glycerol (oxidative route): step 1/2. Catalyzes the NAD-dependent oxidation of glycerol to dihydroxyacetone (glycerone). Allows microorganisms to utilize glycerol as a source of carbon under anaerobic conditions. The polypeptide is Glycerol dehydrogenase (gldA) (Pseudomonas putida (Arthrobacter siderocapsulatus)).